The chain runs to 315 residues: Methionyl-tRNA formyltransferase (315 aa).

112–115 is a (6S)-5,6,7,8-tetrahydrofolate binding site; that stretch reads SLLP.

It belongs to the Fmt family.

The enzyme catalyses L-methionyl-tRNA(fMet) + (6R)-10-formyltetrahydrofolate = N-formyl-L-methionyl-tRNA(fMet) + (6S)-5,6,7,8-tetrahydrofolate + H(+). Attaches a formyl group to the free amino group of methionyl-tRNA(fMet). The formyl group appears to play a dual role in the initiator identity of N-formylmethionyl-tRNA by promoting its recognition by IF2 and preventing the misappropriation of this tRNA by the elongation apparatus. This chain is Methionyl-tRNA formyltransferase, found in Leptospira interrogans serogroup Icterohaemorrhagiae serovar copenhageni (strain Fiocruz L1-130).